Consider the following 102-residue polypeptide: N(4)-acetylcytidine amidohydrolase (102 aa).

The ASCH domain occupies 6 to 92 (TFFGRFEADI…VIKAIYPGLD (87 aa)). Lysine 20 (proton acceptor) is an active-site residue. Threonine 23 (nucleophile) is an active-site residue. Glutamate 73 serves as the catalytic Proton donor.

It belongs to the N(4)-acetylcytidine amidohydrolase family.

The enzyme catalyses N(4)-acetylcytidine + H2O = cytidine + acetate + H(+). It catalyses the reaction N(4)-acetyl-2'-deoxycytidine + H2O = 2'-deoxycytidine + acetate + H(+). It carries out the reaction N(4)-acetylcytosine + H2O = cytosine + acetate + H(+). In terms of biological role, catalyzes the hydrolysis of N(4)-acetylcytidine (ac4C). This Yersinia pseudotuberculosis serotype O:1b (strain IP 31758) protein is N(4)-acetylcytidine amidohydrolase.